Consider the following 415-residue polypeptide: Gamma-glutamyl phosphate reductase (415 aa).

Belongs to the gamma-glutamyl phosphate reductase family.

It is found in the cytoplasm. The enzyme catalyses L-glutamate 5-semialdehyde + phosphate + NADP(+) = L-glutamyl 5-phosphate + NADPH + H(+). It participates in amino-acid biosynthesis; L-proline biosynthesis; L-glutamate 5-semialdehyde from L-glutamate: step 2/2. Functionally, catalyzes the NADPH-dependent reduction of L-glutamate 5-phosphate into L-glutamate 5-semialdehyde and phosphate. The product spontaneously undergoes cyclization to form 1-pyrroline-5-carboxylate. The sequence is that of Gamma-glutamyl phosphate reductase from Parabacteroides distasonis (strain ATCC 8503 / DSM 20701 / CIP 104284 / JCM 5825 / NCTC 11152).